A 121-amino-acid polypeptide reads, in one-letter code: Protein MGF 110-5L (121 aa).

An N-terminal signal peptide occupies residues 1–20; it reads MLVIFLGILGLLANQVSSQL. 2 N-linked (GlcNAc...) asparagine; by host glycosylation sites follow: Asn62 and Asn116.

The protein belongs to the asfivirus MGF 110 family.

The protein is Protein MGF 110-5L of African swine fever virus (isolate Portugal/Lis 57/1957) (ASFV).